The sequence spans 310 residues: Methionyl-tRNA formyltransferase (310 aa).

Residue 109 to 112 (SLLP) coordinates (6S)-5,6,7,8-tetrahydrofolate.

The protein belongs to the Fmt family.

The enzyme catalyses L-methionyl-tRNA(fMet) + (6R)-10-formyltetrahydrofolate = N-formyl-L-methionyl-tRNA(fMet) + (6S)-5,6,7,8-tetrahydrofolate + H(+). Its function is as follows. Attaches a formyl group to the free amino group of methionyl-tRNA(fMet). The formyl group appears to play a dual role in the initiator identity of N-formylmethionyl-tRNA by promoting its recognition by IF2 and preventing the misappropriation of this tRNA by the elongation apparatus. The protein is Methionyl-tRNA formyltransferase of Pseudomonas entomophila (strain L48).